An 820-amino-acid chain; its full sequence is Potassium channel GORK (820 aa).

The Cytoplasmic portion of the chain corresponds to 1–69 (MGRLRRRQEI…PKNRWYKAWE (69 aa)). Residues 70-90 (MFILVWAIYSSLFTPMEFGFF) form a helical membrane-spanning segment. Residues 91 to 97 (RGLPERL) lie on the Extracellular side of the membrane. The helical transmembrane segment at 98-118 (FVLDIVGQIAFLVDIVLQFFV) threads the bilayer. Residues 119-141 (AYRDTQTYRTVYKPTRIAFRYLK) are Cytoplasmic-facing. A helical transmembrane segment spans residues 142–162 (SHFLMDFIGCFPWDLIYKASG). Over 163 to 168 (KHELVR) the chain is Extracellular. A helical; Voltage-sensor membrane pass occupies residues 169–189 (YLLWIRLFRVRKVVEFFQRLE). Over 190–203 (KDTRINYLFTRILK) the chain is Cytoplasmic. The helical transmembrane segment at 204-224 (LLFVEVYCTHTAACIFYYLAT) threads the bilayer. At 225 to 259 (TLPPENEGYTWIGSLKLGDYSYENFREIDLWKRYT) the chain is on the extracellular side. The segment at residues 260 to 279 (TALYFAIVTMATVGYGDIHA) is an intramembrane region (pore-forming). Residues 280-285 (VNLREM) are Extracellular-facing. A helical transmembrane segment spans residues 286 to 306 (IFVMIYVSFDMVLGAYLIGNI). Over 307–820 (TALIVKGSNT…YMISDTTDQT (514 aa)) the chain is Cytoplasmic. Residue 386–508 (LFKGCSTEFI…ILNNIMEEKE (123 aa)) participates in a nucleoside 3',5'-cyclic phosphate binding. ANK repeat units lie at residues 528-559 (EAEL…DPNK), 563-592 (DGRS…DVNL), 596-625 (FGHT…SFNL), 627-656 (DSGN…NPNS), 660-689 (DHRT…SVIS), and 693-722 (WGNS…AQSS). Residues 740–820 (KCTVFPFHPQ…YMISDTTDQT (81 aa)) enclose the KHA domain.

The protein belongs to the potassium channel family. Plant (TC 1.A.1.4) subfamily. In terms of assembly, the potassium channel is probably composed of a homo- or heterotetrameric complex of pore-forming subunits. Expressed in guard cell-containing tissues, in root epidermal cells and in root hairs. Detected in vascular cells of the root and shoot.

The protein localises to the membrane. Major selective outward-rectifying potassium channel of the guard cell membrane. Involved in regulation of stomatal movements according to the water status. Assuming opened or closed conformations in response to the voltage difference across the membrane, the channel is activated by depolarization. Conductance of the channel is modulated in a potassium-dependent fashion. May interact with the cytoskeleton or with regulatory proteins. The chain is Potassium channel GORK (GORK) from Arabidopsis thaliana (Mouse-ear cress).